The chain runs to 229 residues: Phosphoglycolate phosphatase (229 aa).

The active-site Nucleophile is the D13. 3 residues coordinate Mg(2+): D13, D15, and D178.

Belongs to the HAD-like hydrolase superfamily. CbbY/CbbZ/Gph/YieH family. Requires Mg(2+) as cofactor.

The enzyme catalyses 2-phosphoglycolate + H2O = glycolate + phosphate. It participates in organic acid metabolism; glycolate biosynthesis; glycolate from 2-phosphoglycolate: step 1/1. Functionally, specifically catalyzes the dephosphorylation of 2-phosphoglycolate. Is involved in the dissimilation of the intracellular 2-phosphoglycolate formed during the DNA repair of 3'-phosphoglycolate ends, a major class of DNA lesions induced by oxidative stress. The protein is Phosphoglycolate phosphatase of Photobacterium profundum (strain SS9).